Reading from the N-terminus, the 824-residue chain is ABC transporter B family member 7 (824 aa).

The disordered stretch occupies residues 41–101 (RNSVKFNLDT…NKNNKNKINN (61 aa)). The span at 63–101 (NNNKNNNNNNNNNNNNNNNNNNNNNNNNNNKNNKNKINN) shows a compositional bias: low complexity. The next 6 membrane-spanning stretches (helical) occupy residues 164–184 (IWYFVFAFLALSITTLCQLAL), 252–272 (WIIIIVLVQTPFLFARYLLFT), 325–345 (LSTLVRCSLQLIGGLLILVFL), 347–367 (WKVTLLMISFLVILLISFLVF), 431–451 (AFWISFGSLLVMGTIIGIYGF), and 461–481 (ILLLQFILYSLMITASMNGLI). Residues 167–489 (FVFAFLALSI…LIGSINEIQK (323 aa)) form the ABC transmembrane type-1 domain. In terms of domain architecture, ABC transporter spans 521-767 (ISFDNVYFNN…STSFYVTSVL (247 aa)). An ATP-binding site is contributed by 570–576 (GPSQSKE). Residues 772–813 (NKYNNNNNNNNNNNNNNNNNNNNNNNNNNNNNNNNNNNNINN) are disordered.

The protein belongs to the ABC transporter superfamily. ABCB family.

It is found in the membrane. This chain is ABC transporter B family member 7 (abcB7), found in Dictyostelium discoideum (Social amoeba).